The chain runs to 404 residues: Druantia protein DruA (404 aa).

The protein localises to the cytoplasm. Functionally, component of antiviral defense system Druantia type I, composed of DruA, DruB, DruC, DruD and DruE. Expression of Druantia in E.coli (strain MG1655) confers resistance to phage lambda, SECphi18, SECphi27 and T4. The chain is Druantia protein DruA from Escherichia coli (strain UMEA 4076-1).